A 244-amino-acid polypeptide reads, in one-letter code: Ribosomal RNA small subunit methyltransferase NEP1 (244 aa).

Residues 1–34 (MAAPSDGFKPRERSGGEQAQDWDALPPKRPRLGA) are disordered. At A2 the chain carries N-acetylalanine. Phosphoserine is present on residues S5 and S14. Residues T176, G201, G206, and 219–224 (ISNYPL) contribute to the S-adenosyl-L-methionine site.

Belongs to the class IV-like SAM-binding methyltransferase superfamily. RNA methyltransferase NEP1 family. In terms of assembly, homodimer. Part of the small subunit (SSU) processome, composed of more than 70 proteins and the RNA chaperone small nucleolar RNA (snoRNA) U3.

It localises to the nucleus. It is found in the nucleolus. It carries out the reaction pseudouridine(1248) in human 18S rRNA + S-adenosyl-L-methionine = N(1)-methylpseudouridine(1248) in human 18S rRNA + S-adenosyl-L-homocysteine + H(+). S-adenosyl-L-methionine-dependent pseudouridine N(1)-methyltransferase that methylates pseudouridine at position 1248 (Psi1248) in 18S rRNA. Involved the biosynthesis of the hypermodified N1-methyl-N3-(3-amino-3-carboxypropyl) pseudouridine (m1acp3-Psi) conserved in eukaryotic 18S rRNA. Is not able to methylate uridine at this position. Also has an essential role in 40S ribosomal subunit biogenesis independent on its methyltransferase activity, facilitating the incorporation of ribosomal protein S19 during the formation of pre-ribosomes. Part of the small subunit (SSU) processome, first precursor of the small eukaryotic ribosomal subunit. During the assembly of the SSU processome in the nucleolus, many ribosome biogenesis factors, an RNA chaperone and ribosomal proteins associate with the nascent pre-rRNA and work in concert to generate RNA folding, modifications, rearrangements and cleavage as well as targeted degradation of pre-ribosomal RNA by the RNA exosome. The chain is Ribosomal RNA small subunit methyltransferase NEP1 from Homo sapiens (Human).